Reading from the N-terminus, the 169-residue chain is Crossover junction endodeoxyribonuclease RuvC (169 aa).

Active-site residues include Asp-12, Glu-72, and Asp-144. Mg(2+) is bound by residues Asp-12, Glu-72, and Asp-144.

It belongs to the RuvC family. In terms of assembly, homodimer which binds Holliday junction (HJ) DNA. The HJ becomes 2-fold symmetrical on binding to RuvC with unstacked arms; it has a different conformation from HJ DNA in complex with RuvA. In the full resolvosome a probable DNA-RuvA(4)-RuvB(12)-RuvC(2) complex forms which resolves the HJ. Mg(2+) is required as a cofactor.

Its subcellular location is the cytoplasm. The catalysed reaction is Endonucleolytic cleavage at a junction such as a reciprocal single-stranded crossover between two homologous DNA duplexes (Holliday junction).. Its function is as follows. The RuvA-RuvB-RuvC complex processes Holliday junction (HJ) DNA during genetic recombination and DNA repair. Endonuclease that resolves HJ intermediates. Cleaves cruciform DNA by making single-stranded nicks across the HJ at symmetrical positions within the homologous arms, yielding a 5'-phosphate and a 3'-hydroxyl group; requires a central core of homology in the junction. The consensus cleavage sequence is 5'-(A/T)TT(C/G)-3'. Cleavage occurs on the 3'-side of the TT dinucleotide at the point of strand exchange. HJ branch migration catalyzed by RuvA-RuvB allows RuvC to scan DNA until it finds its consensus sequence, where it cleaves and resolves the cruciform DNA. The chain is Crossover junction endodeoxyribonuclease RuvC from Azorhizobium caulinodans (strain ATCC 43989 / DSM 5975 / JCM 20966 / LMG 6465 / NBRC 14845 / NCIMB 13405 / ORS 571).